The primary structure comprises 418 residues: Light-independent protochlorophyllide reductase subunit N (418 aa).

Cysteine 17, cysteine 42, and cysteine 103 together coordinate [4Fe-4S] cluster.

It belongs to the BchN/ChlN family. In terms of assembly, protochlorophyllide reductase is composed of three subunits; ChlL, ChlN and ChlB. Forms a heterotetramer of two ChlB and two ChlN subunits. [4Fe-4S] cluster is required as a cofactor.

The catalysed reaction is chlorophyllide a + oxidized 2[4Fe-4S]-[ferredoxin] + 2 ADP + 2 phosphate = protochlorophyllide a + reduced 2[4Fe-4S]-[ferredoxin] + 2 ATP + 2 H2O. It functions in the pathway porphyrin-containing compound metabolism; chlorophyll biosynthesis (light-independent). In terms of biological role, component of the dark-operative protochlorophyllide reductase (DPOR) that uses Mg-ATP and reduced ferredoxin to reduce ring D of protochlorophyllide (Pchlide) to form chlorophyllide a (Chlide). This reaction is light-independent. The NB-protein (ChlN-ChlB) is the catalytic component of the complex. The sequence is that of Light-independent protochlorophyllide reductase subunit N from Prochlorococcus marinus (strain MIT 9303).